The following is a 186-amino-acid chain: Peptidyl-tRNA hydrolase (186 aa).

Position 13 (Tyr-13) interacts with tRNA. The active-site Proton acceptor is His-18. The tRNA site is built by Tyr-59, Asn-61, and Asn-107.

Belongs to the PTH family. In terms of assembly, monomer.

The protein resides in the cytoplasm. The catalysed reaction is an N-acyl-L-alpha-aminoacyl-tRNA + H2O = an N-acyl-L-amino acid + a tRNA + H(+). Its function is as follows. Hydrolyzes ribosome-free peptidyl-tRNAs (with 1 or more amino acids incorporated), which drop off the ribosome during protein synthesis, or as a result of ribosome stalling. Functionally, catalyzes the release of premature peptidyl moieties from peptidyl-tRNA molecules trapped in stalled 50S ribosomal subunits, and thus maintains levels of free tRNAs and 50S ribosomes. The protein is Peptidyl-tRNA hydrolase of Thermotoga sp. (strain RQ2).